An 884-amino-acid chain; its full sequence is Alanine--tRNA ligase (884 aa).

Zn(2+)-binding residues include histidine 565, histidine 569, cysteine 672, and histidine 676.

The protein belongs to the class-II aminoacyl-tRNA synthetase family. Zn(2+) is required as a cofactor.

It is found in the cytoplasm. It carries out the reaction tRNA(Ala) + L-alanine + ATP = L-alanyl-tRNA(Ala) + AMP + diphosphate. In terms of biological role, catalyzes the attachment of alanine to tRNA(Ala) in a two-step reaction: alanine is first activated by ATP to form Ala-AMP and then transferred to the acceptor end of tRNA(Ala). Also edits incorrectly charged Ser-tRNA(Ala) and Gly-tRNA(Ala) via its editing domain. The polypeptide is Alanine--tRNA ligase (Sphingopyxis alaskensis (strain DSM 13593 / LMG 18877 / RB2256) (Sphingomonas alaskensis)).